The sequence spans 584 residues: Probable pectinesterase/pectinesterase inhibitor (584 aa).

Residues 1 to 22 (MAVGKIVISVASMLLVVGVAIG) form the signal peptide. Residues 40–191 (NSHQKAVESL…KILSSNAIDI (152 aa)) form a pectinesterase inhibitor region. Residues N91 and N105 are each glycosylated (N-linked (GlcNAc...) asparagine). The interval 246–267 (AQAGRPGAPADEGIGEGGGGGG) is disordered. Positions 272-571 (THVVAKDGSG…TVANWLTPAN (300 aa)) are pectinesterase. The substrate site is built by T349 and Q379. D402 serves as the catalytic Proton donor; for pectinesterase activity. Residue D423 is the Nucleophile; for pectinesterase activity of the active site. Residues R492 and W494 each coordinate substrate.

This sequence in the N-terminal section; belongs to the PMEI family. The protein in the C-terminal section; belongs to the pectinesterase family. As to expression, pollen, and at much lower levels in pistils and petals.

It is found in the secreted. It localises to the cell wall. The enzyme catalyses [(1-&gt;4)-alpha-D-galacturonosyl methyl ester](n) + n H2O = [(1-&gt;4)-alpha-D-galacturonosyl](n) + n methanol + n H(+). It participates in glycan metabolism; pectin degradation; 2-dehydro-3-deoxy-D-gluconate from pectin: step 1/5. Its function is as follows. Acts in the modification of cell walls via demethylesterification of cell wall pectin. The chain is Probable pectinesterase/pectinesterase inhibitor (BP19) from Brassica napus (Rape).